Reading from the N-terminus, the 146-residue chain is NADPH-dependent 7-cyano-7-deazaguanine reductase (146 aa).

Cys48 (thioimide intermediate) is an active-site residue. The active-site Proton donor is Asp55. Residues 70–72 (VES) and 89–90 (HE) each bind substrate.

The protein belongs to the GTP cyclohydrolase I family. QueF type 1 subfamily.

Its subcellular location is the cytoplasm. It carries out the reaction 7-aminomethyl-7-carbaguanine + 2 NADP(+) = 7-cyano-7-deazaguanine + 2 NADPH + 3 H(+). Its pathway is tRNA modification; tRNA-queuosine biosynthesis. Catalyzes the NADPH-dependent reduction of 7-cyano-7-deazaguanine (preQ0) to 7-aminomethyl-7-deazaguanine (preQ1). This chain is NADPH-dependent 7-cyano-7-deazaguanine reductase, found in Helicobacter pylori (strain Shi470).